The chain runs to 66 residues: DNA-directed RNA polymerase subunit Rpo10 (66 aa).

Zn(2+) is bound by residues cysteine 7, cysteine 10, cysteine 44, and cysteine 45.

Belongs to the archaeal Rpo10/eukaryotic RPB10 RNA polymerase subunit family. In terms of assembly, part of the RNA polymerase complex. It depends on Zn(2+) as a cofactor.

It is found in the cytoplasm. The catalysed reaction is RNA(n) + a ribonucleoside 5'-triphosphate = RNA(n+1) + diphosphate. In terms of biological role, DNA-dependent RNA polymerase (RNAP) catalyzes the transcription of DNA into RNA using the four ribonucleoside triphosphates as substrates. The polypeptide is DNA-directed RNA polymerase subunit Rpo10 (Sulfurisphaera tokodaii (strain DSM 16993 / JCM 10545 / NBRC 100140 / 7) (Sulfolobus tokodaii)).